A 308-amino-acid polypeptide reads, in one-letter code: Quinolinate synthase (308 aa).

Iminosuccinate contacts are provided by histidine 24 and serine 41. Residue cysteine 86 participates in [4Fe-4S] cluster binding. Iminosuccinate-binding positions include 112 to 114 (YIN) and serine 129. Cysteine 172 serves as a coordination point for [4Fe-4S] cluster. Iminosuccinate is bound by residues 198-200 (HPE) and threonine 215. Cysteine 265 is a binding site for [4Fe-4S] cluster.

This sequence belongs to the quinolinate synthase family. Type 2 subfamily. Requires [4Fe-4S] cluster as cofactor.

Its subcellular location is the cytoplasm. It catalyses the reaction iminosuccinate + dihydroxyacetone phosphate = quinolinate + phosphate + 2 H2O + H(+). Its pathway is cofactor biosynthesis; NAD(+) biosynthesis; quinolinate from iminoaspartate: step 1/1. Functionally, catalyzes the condensation of iminoaspartate with dihydroxyacetone phosphate to form quinolinate. The chain is Quinolinate synthase from Sulfurihydrogenibium sp. (strain YO3AOP1).